The primary structure comprises 194 residues: Small ribosomal subunit protein uS4c (194 aa).

Residues 13 to 36 (GLTSKRPRSGSDPKNQLRSGKKSQ) form a disordered region. An S4 RNA-binding domain is found at 82–143 (MRLDNILFRL…KQRSKALIQN (62 aa)).

Belongs to the universal ribosomal protein uS4 family. As to quaternary structure, part of the 30S ribosomal subunit. Contacts protein S5. The interaction surface between S4 and S5 is involved in control of translational fidelity.

Its subcellular location is the plastid. The protein localises to the chloroplast. In terms of biological role, one of the primary rRNA binding proteins, it binds directly to 16S rRNA where it nucleates assembly of the body of the 30S subunit. Its function is as follows. With S5 and S12 plays an important role in translational accuracy. The polypeptide is Small ribosomal subunit protein uS4c (rps4) (Moraea spathulata (Large yellow moraea)).